The sequence spans 508 residues: Photosystem II CP47 reaction center protein (508 aa).

The next 6 membrane-spanning stretches (helical) occupy residues 21 to 36 (AVHI…WAGS), 101 to 115 (IILS…IWHW), 140 to 156 (GIHL…FGAF), 203 to 218 (IAAG…FHLS), 237 to 252 (VLSS…AFIV), and 457 to 472 (CFAL…HGAR).

The protein belongs to the PsbB/PsbC family. PsbB subfamily. As to quaternary structure, PSII is composed of 1 copy each of membrane proteins PsbA, PsbB, PsbC, PsbD, PsbE, PsbF, PsbH, PsbI, PsbJ, PsbK, PsbL, PsbM, PsbT, PsbX, PsbY, PsbZ, Psb30/Ycf12, at least 3 peripheral proteins of the oxygen-evolving complex and a large number of cofactors. It forms dimeric complexes. Binds multiple chlorophylls. PSII binds additional chlorophylls, carotenoids and specific lipids. serves as cofactor.

Its subcellular location is the plastid. It localises to the chloroplast thylakoid membrane. One of the components of the core complex of photosystem II (PSII). It binds chlorophyll and helps catalyze the primary light-induced photochemical processes of PSII. PSII is a light-driven water:plastoquinone oxidoreductase, using light energy to abstract electrons from H(2)O, generating O(2) and a proton gradient subsequently used for ATP formation. The polypeptide is Photosystem II CP47 reaction center protein (Chara vulgaris (Common stonewort)).